A 44-amino-acid polypeptide reads, in one-letter code: AMDKSAKAPQITIFDHRGCSRAPKSETGGTATKDDQMMVKVSQV.

Residues 1–44 (AMDKSAKAPQITIFDHRGCSRAPKSETGGTATKDDQMMVKVSQV) are disordered. 5-hydroxylysine is present on K4. 2 residues coordinate 15,16-dihydrobiliverdin: C19 and R21. Positions 24-26 (KSE) are 15,16-dihydrobiliverdin chromophore. Residue K40 participates in 15,16-dihydrobiliverdin binding.

This sequence belongs to the phycoerythrin family. As to quaternary structure, heterotetramer of 2 different alpha chains and 2 identical beta chains. The subunit composition could comprise of any combination of 2 out of 4 different alpha units with an invariant beta unit. In terms of processing, contains one covalently linked 15,16-dihydrobiliverdin chromophore.

The protein localises to the plastid. It is found in the chloroplast thylakoid membrane. Functionally, light-harvesting photosynthetic tetrapyrrole chromophore-protein from the phycobiliprotein complex. This chain is Phycoerythrin alpha-1 chain (cpeA1), found in Rhodomonas sp. (strain CS 24) (Chroomonas sp. (strain CS24)).